The primary structure comprises 248 residues: Large ribosomal subunit protein uL4 (248 aa).

Positions Pro-45 to Lys-105 are disordered. Over residues Pro-92 to Lys-105 the composition is skewed to basic and acidic residues.

It belongs to the universal ribosomal protein uL4 family. In terms of assembly, part of the 50S ribosomal subunit.

Its function is as follows. One of the primary rRNA binding proteins, this protein initially binds near the 5'-end of the 23S rRNA. It is important during the early stages of 50S assembly. It makes multiple contacts with different domains of the 23S rRNA in the assembled 50S subunit and ribosome. In terms of biological role, forms part of the polypeptide exit tunnel. This Haloquadratum walsbyi (strain DSM 16790 / HBSQ001) protein is Large ribosomal subunit protein uL4.